The following is a 251-amino-acid chain: Derlin-1 (251 aa).

Ser2 bears the N-acetylserine mark. Over Ser2–Thr15 the chain is Cytoplasmic. The chain crosses the membrane as a helical span at residues Arg16–Leu31. Over Gly32 to Gly69 the chain is Lumenal. A helical membrane pass occupies residues Phe70–Gly89. At Ala90–Arg94 the chain is on the cytoplasmic side. Residues Pro95–Ala115 form a helical membrane-spanning segment. Residues Met116–Met122 are Lumenal-facing. The helical transmembrane segment at Ile123–Asn137 threads the bilayer. The Cytoplasmic portion of the chain corresponds to Arg138–Tyr154. A helical membrane pass occupies residues Leu155–Ile166. Topologically, residues Gly167 to Val170 are lumenal. The chain crosses the membrane as a helical span at residues Ile171–Arg189. Over Tyr190–Gln251 the chain is Cytoplasmic. Ser201 is modified (phosphoserine). Thr202 is modified (phosphothreonine). Phosphoserine is present on Ser226. Residues Arg229–Gln251 are disordered. The SHP-box signature appears at Asn241 to Leu248.

Belongs to the derlin family. Homotetramer. The four subunits of the tetramer are arranged in a twofold symmetry. Forms homo- and heterooligomers with DERL2 and DERL3; binding to DERL3 is poorer than that between DERL2 and DERL3. Interacts (via SHP-box motif) with VCP. Interacts with AMFR, SELENOS, SEL1L, SELENOK and SYVN1, as well as with SEL1L-SYVN1 and VCP-SELENOS protein complexes; this interaction is weaker than that observed between DERL2 and these complexes. Interacts with NGLY1 and YOD1. Does not bind to EDEM1. Interacts with DNAJB9. Interacts with RNF103. Interacts with HM13. Interacts with XBP1 isoform 1 (via luminal/ectodomain domain); the interaction obviates the need for ectodomain shedding prior HM13/SPP-mediated XBP1 isoform 1 cleavage. Interacts with the signal recognition particle/SRP and the SRP receptor; in the process of endoplasmic reticulum stress-induced pre-emptive quality control. May interact with UBXN6. Interacts with ZFAND2B; probably through VCP. Interacts with CCDC47. Interacts with C18orf32. May interact with TRAM1. Forms a complex with SVIP and VCP/p97.

Its subcellular location is the endoplasmic reticulum membrane. Its function is as follows. Functional component of endoplasmic reticulum-associated degradation (ERAD) for misfolded lumenal proteins. Forms homotetramers which encircle a large channel traversing the endoplasmic reticulum (ER) membrane. This allows the retrotranslocation of misfolded proteins from the ER into the cytosol where they are ubiquitinated and degraded by the proteasome. The channel has a lateral gate within the membrane which provides direct access to membrane proteins with no need to reenter the ER lumen first. May mediate the interaction between VCP and the misfolded protein. Also involved in endoplasmic reticulum stress-induced pre-emptive quality control, a mechanism that selectively attenuates the translocation of newly synthesized proteins into the endoplasmic reticulum and reroutes them to the cytosol for proteasomal degradation. By controlling the steady-state expression of the IGF1R receptor, indirectly regulates the insulin-like growth factor receptor signaling pathway. This is Derlin-1 from Pongo abelii (Sumatran orangutan).